The following is a 157-amino-acid chain: Transcription elongation factor GreA (157 aa).

Positions 17–37 form a coiled coil; it reads ELERLLKLRPQISEAIAEARE.

Belongs to the GreA/GreB family.

Its function is as follows. Necessary for efficient RNA polymerase transcription elongation past template-encoded arresting sites. The arresting sites in DNA have the property of trapping a certain fraction of elongating RNA polymerases that pass through, resulting in locked ternary complexes. Cleavage of the nascent transcript by cleavage factors such as GreA or GreB allows the resumption of elongation from the new 3'terminus. GreA releases sequences of 2 to 3 nucleotides. The polypeptide is Transcription elongation factor GreA (Vibrio parahaemolyticus serotype O3:K6 (strain RIMD 2210633)).